The primary structure comprises 48 residues: Large ribosomal subunit protein bL34 (48 aa).

Belongs to the bacterial ribosomal protein bL34 family.

This chain is Large ribosomal subunit protein bL34 (rpmH), found in Mycoplasma pneumoniae (strain ATCC 29342 / M129 / Subtype 1) (Mycoplasmoides pneumoniae).